Here is a 410-residue protein sequence, read N- to C-terminus: Elongation factor Tu, chloroplastic (410 aa).

In terms of domain architecture, tr-type G spans 10-215 (KPHVNIGTIG…AVDQYIPTPK (206 aa)). Residues 19 to 26 (GHVDHGKT) form a G1 region. 19–26 (GHVDHGKT) serves as a coordination point for GTP. Position 26 (threonine 26) interacts with Mg(2+). A G2 region spans residues 61–65 (GITIN). The interval 82–85 (DCPG) is G3. GTP is bound by residues 82–86 (DCPGH) and 137–140 (NKQD). The G4 stretch occupies residues 137 to 140 (NKQD). Residues 175 to 177 (SAL) form a G5 region.

The protein belongs to the TRAFAC class translation factor GTPase superfamily. Classic translation factor GTPase family. EF-Tu/EF-1A subfamily.

The protein localises to the plastid. The protein resides in the chloroplast. It carries out the reaction GTP + H2O = GDP + phosphate + H(+). GTP hydrolase that promotes the GTP-dependent binding of aminoacyl-tRNA to the A-site of ribosomes during protein biosynthesis. In Nephroselmis olivacea (Green alga), this protein is Elongation factor Tu, chloroplastic (tufA).